A 380-amino-acid chain; its full sequence is Set1 complex component swd3 (380 aa).

7 WD repeats span residues 52-91 (GHEK…LECT), 94-133 (GHYR…SVRC), 136-177 (GHTN…RMLP), 179-219 (HSEP…KTLV), 221-262 (PINV…RIFD), 291-330 (NDSS…IIDD), and 335-374 (SDDP…SKHE). At S379 the chain carries Phosphoserine.

Component of the Set1 complex composed of ash2, sdc1, set1, shg1, spp1, swd1, swd2 and swd3.

The protein localises to the nucleus. Functionally, the Set1 complex specifically methylates 'Lys-4' of histone H3. The protein is Set1 complex component swd3 of Schizosaccharomyces pombe (strain 972 / ATCC 24843) (Fission yeast).